The chain runs to 86 residues: DNA-directed RNA polymerase subunit Rpo11 (86 aa).

Belongs to the archaeal Rpo11/eukaryotic RPB11/RPC19 RNA polymerase subunit family. As to quaternary structure, part of the RNA polymerase complex.

The protein resides in the cytoplasm. The enzyme catalyses RNA(n) + a ribonucleoside 5'-triphosphate = RNA(n+1) + diphosphate. Its function is as follows. DNA-dependent RNA polymerase (RNAP) catalyzes the transcription of DNA into RNA using the four ribonucleoside triphosphates as substrates. This Archaeoglobus fulgidus (strain ATCC 49558 / DSM 4304 / JCM 9628 / NBRC 100126 / VC-16) protein is DNA-directed RNA polymerase subunit Rpo11.